A 150-amino-acid polypeptide reads, in one-letter code: Snaclec CTL-Eoc125 (150 aa).

Residues 1-23 (MGRFISVSFGLLVVFLSLSGIGA) form the signal peptide. Disulfide bonds link C27–C38, C55–C144, and C121–C136. The C-type lectin domain occupies 34–145 (YEGHCYKVFS…CSSTQQFICK (112 aa)).

Belongs to the snaclec family. In terms of assembly, heterodimer; disulfide-linked. Expressed by the venom gland.

The protein localises to the secreted. Interferes with one step of hemostasis (modulation of platelet aggregation, or coagulation cascade, for example). The sequence is that of Snaclec CTL-Eoc125 from Echis ocellatus (Ocellated saw-scaled viper).